Reading from the N-terminus, the 279-residue chain is Movement protein (279 aa).

A disordered region spans residues 246-279 (SESEDLNVESPPAAIGSSSASRSEAFRPQVVNGL). Residues 254–268 (ESPPAAIGSSSASRS) are compositionally biased toward low complexity.

The protein belongs to the cucumovirus movement protein family.

It is found in the host cell junction. Its subcellular location is the host plasmodesma. Transports viral genome to neighboring plant cells directly through plasmosdesmata, without any budding. The movement protein allows efficient cell to cell propagation, by bypassing the host cell wall barrier. Acts by forming a tubular structure at the host plasmodesmata, enlarging it enough to allow free passage of virion capsids. This Cucurbita pepo (Vegetable marrow) protein is Movement protein.